We begin with the raw amino-acid sequence, 345 residues long: Phosphoribosylformylglycinamidine cyclo-ligase (345 aa).

The protein belongs to the AIR synthase family.

The protein resides in the cytoplasm. It carries out the reaction 2-formamido-N(1)-(5-O-phospho-beta-D-ribosyl)acetamidine + ATP = 5-amino-1-(5-phospho-beta-D-ribosyl)imidazole + ADP + phosphate + H(+). Its pathway is purine metabolism; IMP biosynthesis via de novo pathway; 5-amino-1-(5-phospho-D-ribosyl)imidazole from N(2)-formyl-N(1)-(5-phospho-D-ribosyl)glycinamide: step 2/2. This chain is Phosphoribosylformylglycinamidine cyclo-ligase, found in Salmonella choleraesuis (strain SC-B67).